A 224-amino-acid polypeptide reads, in one-letter code: 7-cyano-7-deazaguanine synthase (224 aa).

10–20 (LSGGLDSATVA) is an ATP binding site. 4 residues coordinate Zn(2+): Cys-189, Cys-199, Cys-202, and Cys-205.

The protein belongs to the QueC family. Zn(2+) serves as cofactor.

The enzyme catalyses 7-carboxy-7-deazaguanine + NH4(+) + ATP = 7-cyano-7-deazaguanine + ADP + phosphate + H2O + H(+). Its pathway is purine metabolism; 7-cyano-7-deazaguanine biosynthesis. Catalyzes the ATP-dependent conversion of 7-carboxy-7-deazaguanine (CDG) to 7-cyano-7-deazaguanine (preQ(0)). The sequence is that of 7-cyano-7-deazaguanine synthase from Azotobacter vinelandii (strain DJ / ATCC BAA-1303).